The sequence spans 147 residues: UPF0260 protein PMI1174 (147 aa).

It belongs to the UPF0260 family.

The protein is UPF0260 protein PMI1174 of Proteus mirabilis (strain HI4320).